The chain runs to 309 residues: Aspartate carbamoyltransferase catalytic subunit (309 aa).

Carbamoyl phosphate-binding residues include arginine 55 and threonine 56. Residue lysine 85 participates in L-aspartate binding. Carbamoyl phosphate is bound by residues arginine 106, histidine 135, and glutamine 138. Residues arginine 168 and arginine 230 each contribute to the L-aspartate site. Carbamoyl phosphate contacts are provided by leucine 268 and proline 269.

This sequence belongs to the aspartate/ornithine carbamoyltransferase superfamily. ATCase family. Heterododecamer (2C3:3R2) of six catalytic PyrB chains organized as two trimers (C3), and six regulatory PyrI chains organized as three dimers (R2).

It catalyses the reaction carbamoyl phosphate + L-aspartate = N-carbamoyl-L-aspartate + phosphate + H(+). The protein operates within pyrimidine metabolism; UMP biosynthesis via de novo pathway; (S)-dihydroorotate from bicarbonate: step 2/3. In terms of biological role, catalyzes the condensation of carbamoyl phosphate and aspartate to form carbamoyl aspartate and inorganic phosphate, the committed step in the de novo pyrimidine nucleotide biosynthesis pathway. This Vibrio vulnificus (strain YJ016) protein is Aspartate carbamoyltransferase catalytic subunit.